A 424-amino-acid chain; its full sequence is Spermatogenesis-associated protein 2-like protein (424 aa).

2 disordered regions span residues 233 to 258 (EDEG…AELA) and 273 to 300 (TGGR…EEGL). Position 327 is a phosphoserine (Ser327).

This sequence belongs to the SPATA2 family.

In Homo sapiens (Human), this protein is Spermatogenesis-associated protein 2-like protein.